The sequence spans 196 residues: Interleukin-23 subunit alpha (196 aa).

Residues 1–21 (MLDCRAIILLWLLPWATQGLA) form the signal peptide.

It belongs to the IL-6 superfamily. In terms of assembly, heterodimer with IL12B; disulfide-linked. The heterodimer is known as interleukin IL-23. Interacts with IL23R; this interaction enables recruitment of IL12RB1.

Its subcellular location is the secreted. Its function is as follows. Associates with IL12B to form the pro-inflammatory cytokine IL-23 that plays different roles in innate and adaptive immunity. Released by antigen-presenting cells such as dendritic cells or macrophages, binds to a heterodimeric receptor complex composed of IL12RB1 and IL23R to activate JAK2 and TYK2 which then phosphorylate the receptor to form a docking site leading to the phosphorylation of STAT3 and STAT4. This process leads to activation of several pathways including p38 MAPK or NF-kappa-B and promotes the production of pro-inflammatory cytokines such as interleukin-17A/IL17A. In turn, participates in the early and effective intracellular bacterial clearance. Promotes the expansion and survival of T-helper 17 cells, a CD4-positive helper T-cell subset that produces IL-17, as well as other IL-17-producing cells. This Rattus norvegicus (Rat) protein is Interleukin-23 subunit alpha (Il23a).